We begin with the raw amino-acid sequence, 282 residues long: Probable porphobilinogen deaminase (282 aa).

S-(dipyrrolylmethanemethyl)cysteine is present on cysteine 233.

Belongs to the HMBS family. Dipyrromethane serves as cofactor.

It catalyses the reaction 4 porphobilinogen + H2O = hydroxymethylbilane + 4 NH4(+). It functions in the pathway porphyrin-containing compound metabolism; protoporphyrin-IX biosynthesis; coproporphyrinogen-III from 5-aminolevulinate: step 2/4. Its function is as follows. Tetrapolymerization of the monopyrrole PBG into the hydroxymethylbilane pre-uroporphyrinogen in several discrete steps. The sequence is that of Probable porphobilinogen deaminase from Picrophilus torridus (strain ATCC 700027 / DSM 9790 / JCM 10055 / NBRC 100828 / KAW 2/3).